Consider the following 186-residue polypeptide: Hydra actinoporin-like toxin 1 (186 aa).

A signal peptide spans 1-18; it reads MLLYICLVNLLLPLSVGA. An N-terminal region region spans residues 29-48; that stretch reads KVGVDAALQQIDDVWKGKTV. The Cell attachment site, crucial for protein stability motif lies at 158 to 160; sequence RAG.

It belongs to the actinoporin family. HALT subfamily. As to quaternary structure, octamer or nonamer in membranes. Monomer in the soluble state. In vitro, interacts with folate receptor alpha (of target organism). In terms of tissue distribution, expressed female germline during oogenesis.

It is found in the nematocyst. The protein localises to the secreted. The protein resides in the target cell membrane. Pore-forming protein that forms hydrophilic pores and causes cytolysis. Compared to equinatoxin-2 (AC P61914), it reveals lower cytolysis activity (5-12-fold difference, tested on erythrocytes), a larger pore size (probably 2-3 nm) and different affinity to membrane lipids (100-fold lower affinity to sphingomyelin). Binds to sulfatides (SFT) as well as to the two sphingolipids, lysophosphatidic acid (LPA) and sphingosine-1-phosphate (S1P). It seems to bind more strongly to LPA than to S1P and SFT. Shows cytolytic activity on HeLa cells, with a different potency than its paralogs (from most potent to less potent: HALT-4&gt;HALT-6~HALT-1&gt;HALT-3&gt;HALT-7&gt;HALT-2). Pore formation is a multi-step process that involves specific recognition of membrane lipid by a protein aromatic residues rich region, firm binding to the membrane (mainly driven by hydrophobic interactions) accompanied by the transfer of the N-terminal region to the lipid-water interface and finally pore formation after oligomerization of monomers. In vitro, binds to the folate receptor alpha (FOLR1), a GPI-anchored membrane protein that plays a major role in the uptake of folate/folic acid into cells via endocytosis, suggesting a possible involvement of this receptor in the mechanism of HALT-1-induced cell lysis. In vivo, does not cause visible paralysis in larvae of the blowfly Sarcophaga faculata, the most common arthropod prey of Hydra. The chain is Hydra actinoporin-like toxin 1 from Hydra vulgaris (Hydra).